The primary structure comprises 182 residues: Peptidyl-prolyl cis-trans isomerase ssp-1 (182 aa).

In terms of domain architecture, WW spans 7–41 (TGLPEDWEVRHSQSKNLPYYFNSATKTSRWEPPSG). Positions 71–182 (QGKIRCAHLL…SGLHLIERLE (112 aa)) constitute a PpiC domain.

It catalyses the reaction [protein]-peptidylproline (omega=180) = [protein]-peptidylproline (omega=0). Its function is as follows. Site-specific PPIase with respect to the amino acid N-terminal to the proline residue. Peptides with glutamate, phosphoserine, or phosphothreonine in the -1 position are the best substrates. It is not only able to isomerize small peptides but is also active in protein folding. In Neurospora crassa (strain ATCC 24698 / 74-OR23-1A / CBS 708.71 / DSM 1257 / FGSC 987), this protein is Peptidyl-prolyl cis-trans isomerase ssp-1 (ssp-1).